The chain runs to 259 residues: 5'-nucleotidase SurE (259 aa).

A divalent metal cation contacts are provided by D8, D9, S40, and N92.

This sequence belongs to the SurE nucleotidase family. It depends on a divalent metal cation as a cofactor.

It localises to the cytoplasm. The enzyme catalyses a ribonucleoside 5'-phosphate + H2O = a ribonucleoside + phosphate. Its function is as follows. Nucleotidase that shows phosphatase activity on nucleoside 5'-monophosphates. The protein is 5'-nucleotidase SurE of Stenotrophomonas maltophilia (strain R551-3).